Reading from the N-terminus, the 294-residue chain is uncharacterized protein (294 aa).

A disordered region spans residues 181 to 204; sequence DEPFPTTKNHNNDKRETNDKDDQQ. The segment covering 190–204 has biased composition (basic and acidic residues); it reads HNNDKRETNDKDDQQ.

The protein belongs to the IIV-6 391R family.

This is an uncharacterized protein from Acheta domesticus (House cricket).